We begin with the raw amino-acid sequence, 674 residues long: Zyxin (674 aa).

Residues 35 to 447 are disordered; that stretch reads PPKPKVNPFR…PHQDQTSGSQ (413 aa). Pro residues predominate over residues 86-109; sequence LPPPPPNEEPMSPPGSSFPPPPPS. Residues 110–120 show a composition bias toward low complexity; it reads FGDDGPGSPLG. 5 stretches are compositionally biased toward pro residues: residues 121-148, 162-180, 187-209, 222-240, and 254-266; these read LFPP…PPPL, ASVP…PAPP, KPAP…PPQS, KPSP…PPVA, and AAPP…PPAP. Composition is skewed to basic and acidic residues over residues 328–341 and 358–387; these read AKHE…KHEA and QRDK…RGER. LIM zinc-binding domains follow at residues 481–542, 543–600, and 601–671; these read ELCG…TLEC, CAVC…RRYA, and PRCT…RARA.

Belongs to the zyxin/ajuba family. In terms of assembly, interacts (via LIM2 domain) with hesx1/anf1.

Its subcellular location is the cytoplasm. The protein resides in the cytoskeleton. The protein localises to the cell junction. It localises to the focal adhesion. Functionally, adhesion plaque protein. May be a component of a signal transduction pathway that mediates adhesion-stimulated changes in gene expression. Suppresses the transcription-repressing activity of hesx1/anf1. This is Zyxin from Xenopus tropicalis (Western clawed frog).